Reading from the N-terminus, the 481-residue chain is Glutamyl-tRNA(Gln) amidotransferase subunit A (481 aa).

Catalysis depends on charge relay system residues Lys76 and Ser151. The Acyl-ester intermediate role is filled by Ser175.

This sequence belongs to the amidase family. GatA subfamily. Heterotrimer of A, B and C subunits.

It catalyses the reaction L-glutamyl-tRNA(Gln) + L-glutamine + ATP + H2O = L-glutaminyl-tRNA(Gln) + L-glutamate + ADP + phosphate + H(+). Functionally, allows the formation of correctly charged Gln-tRNA(Gln) through the transamidation of misacylated Glu-tRNA(Gln) in organisms which lack glutaminyl-tRNA synthetase. The reaction takes place in the presence of glutamine and ATP through an activated gamma-phospho-Glu-tRNA(Gln). This chain is Glutamyl-tRNA(Gln) amidotransferase subunit A, found in Chlorobaculum tepidum (strain ATCC 49652 / DSM 12025 / NBRC 103806 / TLS) (Chlorobium tepidum).